The chain runs to 404 residues: Metacaspase-1 (404 aa).

The segment at 1 to 97 (MHHHHQQPSY…NPQAFGHGAP (97 aa)) is disordered. Active-site residues include His195 and Cys251.

The protein belongs to the peptidase C14B family.

Its function is as follows. Involved in cell death (apoptosis). The sequence is that of Metacaspase-1 (casA) from Emericella nidulans (strain FGSC A4 / ATCC 38163 / CBS 112.46 / NRRL 194 / M139) (Aspergillus nidulans).